Here is an 89-residue protein sequence, read N- to C-terminus: Small ribosomal subunit protein uS15 (89 aa).

Belongs to the universal ribosomal protein uS15 family. Part of the 30S ribosomal subunit. Forms a bridge to the 50S subunit in the 70S ribosome, contacting the 23S rRNA.

One of the primary rRNA binding proteins, it binds directly to 16S rRNA where it helps nucleate assembly of the platform of the 30S subunit by binding and bridging several RNA helices of the 16S rRNA. In terms of biological role, forms an intersubunit bridge (bridge B4) with the 23S rRNA of the 50S subunit in the ribosome. The chain is Small ribosomal subunit protein uS15 from Clavibacter michiganensis subsp. michiganensis (strain NCPPB 382).